The following is a 329-amino-acid chain: Phosphate acyltransferase (329 aa).

It belongs to the PlsX family. Homodimer. Probably interacts with PlsY.

Its subcellular location is the cytoplasm. It catalyses the reaction a fatty acyl-[ACP] + phosphate = an acyl phosphate + holo-[ACP]. It participates in lipid metabolism; phospholipid metabolism. Functionally, catalyzes the reversible formation of acyl-phosphate (acyl-PO(4)) from acyl-[acyl-carrier-protein] (acyl-ACP). This enzyme utilizes acyl-ACP as fatty acyl donor, but not acyl-CoA. This Shouchella clausii (strain KSM-K16) (Alkalihalobacillus clausii) protein is Phosphate acyltransferase.